The sequence spans 154 residues: 6,7-dimethyl-8-ribityllumazine synthase (154 aa).

Residues F22, 56 to 58, and 80 to 82 contribute to the 5-amino-6-(D-ribitylamino)uracil site; these read AFE and AVI. 85–86 is a (2S)-2-hydroxy-3-oxobutyl phosphate binding site; the sequence is AT. The active-site Proton donor is H88. F113 contacts 5-amino-6-(D-ribitylamino)uracil. Residue R127 coordinates (2S)-2-hydroxy-3-oxobutyl phosphate.

It belongs to the DMRL synthase family. In terms of assembly, forms an icosahedral capsid composed of 60 subunits, arranged as a dodecamer of pentamers.

The enzyme catalyses (2S)-2-hydroxy-3-oxobutyl phosphate + 5-amino-6-(D-ribitylamino)uracil = 6,7-dimethyl-8-(1-D-ribityl)lumazine + phosphate + 2 H2O + H(+). It participates in cofactor biosynthesis; riboflavin biosynthesis; riboflavin from 2-hydroxy-3-oxobutyl phosphate and 5-amino-6-(D-ribitylamino)uracil: step 1/2. Catalyzes the formation of 6,7-dimethyl-8-ribityllumazine by condensation of 5-amino-6-(D-ribitylamino)uracil with 3,4-dihydroxy-2-butanone 4-phosphate. This is the penultimate step in the biosynthesis of riboflavin. This Geobacillus thermodenitrificans (strain NG80-2) protein is 6,7-dimethyl-8-ribityllumazine synthase.